The sequence spans 431 residues: DNA polymerase delta subunit 3 (431 aa).

Residues 64–80 (QGSDSGEDLYSVVLESR) are necessary for function, possibly resulting from its inability to interact with PolD2. Residues 128 to 431 (PGAGKIVPSA…AGIMNFFSKK (304 aa)) are disordered. Low complexity predominate over residues 156-171 (SKSAVKLEPSKSSLKS). Composition is skewed to basic and acidic residues over residues 172–200 (EPAK…EQAS) and 252–271 (SPPE…NKKE). Low complexity predominate over residues 278–290 (PSPTKKPTTANTS). The segment covering 294 to 307 (FDEESAESSDEEEK) has biased composition (acidic residues). 2 stretches are compositionally biased toward basic and acidic residues: residues 308 to 328 (LDML…EKAS) and 343 to 362 (QPPK…KMDT). Residues 387-411 (PANKKVSPKAAAPVNKKKSPPSAAK) show a composition bias toward low complexity.

In terms of assembly, component of both the DNA polymerase delta and DNA polymerase zeta complexes. The DNA polymerase delta complex consists of three subunits: the catalytic subunit PolD1 and two accessory subunits PolD2/Pol31 and PolD3/Pol32. Within the delta complex, interacts with both PolD1 and PolD2. Component of the DNA polymerase zeta complex consisting of four subunits: the catalytic subunit PolZ1 and three accessory subunits PolZ2/Rev7, PolD2/Pol31 and PolD3/Pol32. In terms of tissue distribution, expressed in ovaries (at the protein level). Expressed in ovaries.

The protein resides in the nucleus. Its subcellular location is the nucleoplasm. Accessory component of the DNA polymerase delta complex and possibly the DNA polymerase zeta complex. As a component of the delta complex, participates in high fidelity genome replication, including lagging strand synthesis, DNA recombination and repair. Required to recruit the DNA polymerase delta complex to the nucleus of rapidly dividing embryonic cells, and as a consequence is essential for genome replication during the earliest cell cycles. Increases the efficiency and processivity of DNA synthesis of the DNA polymerases during mitotic DNA replication and repair. During development this function is essential for preventing replication stress that results in the formation of chromosomal fragile sites (CFS) such as chromosomal breaks. Ensures genomic stability by promoting several types of DNA repair mechanisms including repairing broken dicentric chromosomes through homolog-dependent break-induced replication (BIR). During homologous recombination (HR) repair, required for maintaining the processivity of the delta complex during break-induced replication; a form of HR that requires extensive DNA synthesis such as the repair of large gaps. Able to suppress position effect variegation and may therefore have a role in the induction of chromatin state changes that likely include its activities in DNA replication and repair. The polypeptide is DNA polymerase delta subunit 3 (Drosophila melanogaster (Fruit fly)).